We begin with the raw amino-acid sequence, 392 residues long: Glutamate 5-kinase (392 aa).

Position 17 (lysine 17) interacts with ATP. Substrate is bound by residues serine 57, aspartate 144, and asparagine 156. An ATP-binding site is contributed by 176 to 177 (SD). In terms of domain architecture, PUA spans 282 to 359 (AGILSVDAGA…AEIEALLGYA (78 aa)). The interval 373-392 (TEQTGRKAGKSTKKKDEAHA) is disordered.

The protein belongs to the glutamate 5-kinase family.

It is found in the cytoplasm. The enzyme catalyses L-glutamate + ATP = L-glutamyl 5-phosphate + ADP. It participates in amino-acid biosynthesis; L-proline biosynthesis; L-glutamate 5-semialdehyde from L-glutamate: step 1/2. Catalyzes the transfer of a phosphate group to glutamate to form L-glutamate 5-phosphate. In Allorhizobium ampelinum (strain ATCC BAA-846 / DSM 112012 / S4) (Agrobacterium vitis (strain S4)), this protein is Glutamate 5-kinase.